Consider the following 621-residue polypeptide: Amino-acid acetyltransferase, mitochondrial (621 aa).

The transit peptide at 1–77 (MIPRAPPSTQ…RSYLASFGVQ (77 aa)) directs the protein to the mitochondrion. The tract at residues 213 to 233 (PKPGSEEESEPGFSPPETHIY) is disordered. The N-acetyltransferase domain maps to 424 to 600 (LPIRVVRSVS…GSAGLSFIED (177 aa)).

This sequence belongs to the acetyltransferase family.

It is found in the mitochondrion. It carries out the reaction L-glutamate + acetyl-CoA = N-acetyl-L-glutamate + CoA + H(+). Its pathway is amino-acid biosynthesis; L-arginine biosynthesis; N(2)-acetyl-L-ornithine from L-glutamate: step 1/4. Its function is as follows. N-acetylglutamate synthase involved in arginine biosynthesis. This chain is Amino-acid acetyltransferase, mitochondrial (ARG2), found in Coprinopsis cinerea (strain Okayama-7 / 130 / ATCC MYA-4618 / FGSC 9003) (Inky cap fungus).